The primary structure comprises 591 residues: Phosphoglucan phosphatase LSF1, chloroplastic (591 aa).

Residues 1-61 (MAFLQQISGL…RRRRVVLRVV (61 aa)) constitute a chloroplast transit peptide. The Tyrosine-protein phosphatase domain maps to 291–453 (RYSKITEQIY…VDDGKHDGTP (163 aa)). C390 acts as the Phosphocysteine intermediate in catalysis. Position 390-396 (390-396 (CTTGFDR)) interacts with substrate.

It localises to the plastid. The protein localises to the chloroplast. Its function is as follows. Starch granule-associated phosphoglucan phosphatase involved in the control of starch accumulation. Participates in the regulation of the initial steps of starch degradation at the granule surface. May release a different set of phosphate groups from those removed by DSP4. This chain is Phosphoglucan phosphatase LSF1, chloroplastic (LSF1), found in Arabidopsis thaliana (Mouse-ear cress).